The following is a 344-amino-acid chain: Small ribosomal subunit protein mS38 (344 aa).

Disordered stretches follow at residues 1 to 27, 43 to 101, and 325 to 344; these read MIPQSVRRVVAAAPQSPVVSSLAASSA, ALQK…SVPS, and KKYKKLMRRTRNERRKQDRL. Residues 51-74 show a composition bias toward low complexity; it reads SSKPSSPDDGSSRAFAARASVPAA. The segment covering 325 to 338 has biased composition (basic residues); that stretch reads KKYKKLMRRTRNER.

It belongs to the mitochondrion-specific ribosomal protein mS38 family. Component of the mitochondrial small ribosomal subunit (mt-SSU). Mature N.crassa 74S mitochondrial ribosomes consist of a small (37S) and a large (54S) subunit. The 37S small subunit contains a 16S ribosomal RNA (16S mt-rRNA) and 32 different proteins. The 54S large subunit contains a 23S rRNA (23S mt-rRNA) and 42 different proteins.

The protein resides in the mitochondrion. Functionally, component of the mitochondrial ribosome (mitoribosome), a dedicated translation machinery responsible for the synthesis of mitochondrial genome-encoded proteins, including at least some of the essential transmembrane subunits of the mitochondrial respiratory chain. The mitoribosomes are attached to the mitochondrial inner membrane and translation products are cotranslationally integrated into the membrane. This chain is Small ribosomal subunit protein mS38 (cox24), found in Neurospora crassa (strain ATCC 24698 / 74-OR23-1A / CBS 708.71 / DSM 1257 / FGSC 987).